A 101-amino-acid chain; its full sequence is DNA-binding protein Fis (101 aa).

Positions Gln77–Lys96 form a DNA-binding region, H-T-H motif.

The protein belongs to the transcriptional regulatory Fis family. In terms of assembly, homodimer.

Its function is as follows. Activates ribosomal RNA transcription. Plays a direct role in upstream activation of rRNA promoters. In Shewanella baltica (strain OS223), this protein is DNA-binding protein Fis.